The following is a 493-amino-acid chain: Alpha-amylase-related protein (493 aa).

The N-terminal stretch at 1-19 is a signal peptide; that stretch reads MFKFALTLTLCLAGSLSLA. Q20 bears the Pyrrolidone carboxylic acid mark. C47 and C103 are disulfide-bonded. Residues N117, Q168, and D177 each contribute to the Ca(2+) site. A disulfide bond links C156 and C170. R205 is a binding site for chloride. The active-site Nucleophile is the D207. H211 is a Ca(2+) binding site. E244 functions as the Proton donor in the catalytic mechanism. Residues N307 and R342 each coordinate chloride. 3 cysteine pairs are disulfide-bonded: C375–C381, C417–C440, and C447–C459.

Belongs to the glycosyl hydrolase 13 family. As to quaternary structure, monomer. Ca(2+) is required as a cofactor. Chloride serves as cofactor. In terms of tissue distribution, midgut and fat body.

Its subcellular location is the secreted. The enzyme catalyses Endohydrolysis of (1-&gt;4)-alpha-D-glucosidic linkages in polysaccharides containing three or more (1-&gt;4)-alpha-linked D-glucose units.. The protein is Alpha-amylase-related protein (Amyrel) of Drosophila melanogaster (Fruit fly).